Consider the following 123-residue polypeptide: Major pollen allergen Ole e 10 (123 aa).

Residues methionine 1–threonine 21 form the signal peptide. Residues methionine 1–tryptophan 37 are disordered. Cysteine 38 and cysteine 101 form a disulfide bridge.

The N-terminus is blocked. Post-translationally, phosphorylated at Ser-24 when expressed as a recombinant protein in a heterologous system. In terms of processing, not glycosylated. Contains two additional disulfide bonds. In terms of tissue distribution, expressed in mature and germinating pollen.

Its subcellular location is the cytoplasmic vesicle. Functionally, carbohydrate-binding protein binding preferentially 1,3-beta-glucans. May be involved in pollen tube wall re-formation during germination. This chain is Major pollen allergen Ole e 10, found in Olea europaea (Common olive).